A 283-amino-acid polypeptide reads, in one-letter code: Acetylglutamate kinase (283 aa).

Substrate contacts are provided by residues 64–65 (GG), R86, and N178.

The protein belongs to the acetylglutamate kinase family. ArgB subfamily.

The protein localises to the cytoplasm. It catalyses the reaction N-acetyl-L-glutamate + ATP = N-acetyl-L-glutamyl 5-phosphate + ADP. Its pathway is amino-acid biosynthesis; L-arginine biosynthesis; N(2)-acetyl-L-ornithine from L-glutamate: step 2/4. In terms of biological role, catalyzes the ATP-dependent phosphorylation of N-acetyl-L-glutamate. The polypeptide is Acetylglutamate kinase (Lactococcus lactis subsp. cremoris (strain MG1363)).